The primary structure comprises 297 residues: Quinate/shikimate dehydrogenase (297 aa).

Substrate is bound by residues Lys-80 and Asp-116. Residues Ala-141 to Ala-144, Asn-164 to Asp-167, Lys-214, Cys-241 to Asn-244, and Gly-264 contribute to the NAD(+) site.

The protein belongs to the shikimate dehydrogenase family. As to quaternary structure, homodimer.

It carries out the reaction L-quinate + NAD(+) = 3-dehydroquinate + NADH + H(+). The catalysed reaction is L-quinate + NADP(+) = 3-dehydroquinate + NADPH + H(+). The enzyme catalyses shikimate + NADP(+) = 3-dehydroshikimate + NADPH + H(+). It catalyses the reaction shikimate + NAD(+) = 3-dehydroshikimate + NADH + H(+). It functions in the pathway metabolic intermediate biosynthesis; chorismate biosynthesis; chorismate from D-erythrose 4-phosphate and phosphoenolpyruvate: step 4/7. In terms of biological role, the actual biological function of YdiB remains unclear, nor is it known whether 3-dehydroshikimate or quinate represents the natural substrate. Catalyzes the reversible NAD-dependent reduction of both 3-dehydroshikimate (DHSA) and 3-dehydroquinate to yield shikimate (SA) and quinate, respectively. It can use both NAD or NADP for catalysis, however it has higher catalytic efficiency with NAD. The protein is Quinate/shikimate dehydrogenase of Shigella dysenteriae serotype 1 (strain Sd197).